The sequence spans 455 residues: Ribulose bisphosphate carboxylase large chain (455 aa).

An N6,N6,N6-trimethyllysine modification is found at Lys5. 2 residues coordinate substrate: Asn114 and Thr164. Catalysis depends on Lys166, which acts as the Proton acceptor. Lys168 contributes to the substrate binding site. 3 residues coordinate Mg(2+): Lys192, Asp194, and Glu195. Lys192 bears the N6-carboxylysine mark. The Proton acceptor role is filled by His285. Substrate contacts are provided by Arg286, His318, and Ser370.

The protein belongs to the RuBisCO large chain family. Type I subfamily. In terms of assembly, heterohexadecamer of 8 large chains and 8 small chains; disulfide-linked. The disulfide link is formed within the large subunit homodimers. It depends on Mg(2+) as a cofactor. The disulfide bond which can form in the large chain dimeric partners within the hexadecamer appears to be associated with oxidative stress and protein turnover.

It localises to the plastid. Its subcellular location is the chloroplast. It carries out the reaction 2 (2R)-3-phosphoglycerate + 2 H(+) = D-ribulose 1,5-bisphosphate + CO2 + H2O. The catalysed reaction is D-ribulose 1,5-bisphosphate + O2 = 2-phosphoglycolate + (2R)-3-phosphoglycerate + 2 H(+). RuBisCO catalyzes two reactions: the carboxylation of D-ribulose 1,5-bisphosphate, the primary event in carbon dioxide fixation, as well as the oxidative fragmentation of the pentose substrate in the photorespiration process. Both reactions occur simultaneously and in competition at the same active site. The protein is Ribulose bisphosphate carboxylase large chain of Senna didymobotrya (Popcorn cassia).